The sequence spans 131 residues: Phosphoribosyl-AMP cyclohydrolase (131 aa).

Residue D78 coordinates Mg(2+). C79 serves as a coordination point for Zn(2+). D80 and D82 together coordinate Mg(2+). Zn(2+)-binding residues include C96 and C103.

This sequence belongs to the PRA-CH family. In terms of assembly, homodimer. Requires Mg(2+) as cofactor. It depends on Zn(2+) as a cofactor.

The protein localises to the cytoplasm. The enzyme catalyses 1-(5-phospho-beta-D-ribosyl)-5'-AMP + H2O = 1-(5-phospho-beta-D-ribosyl)-5-[(5-phospho-beta-D-ribosylamino)methylideneamino]imidazole-4-carboxamide. It participates in amino-acid biosynthesis; L-histidine biosynthesis; L-histidine from 5-phospho-alpha-D-ribose 1-diphosphate: step 3/9. In terms of biological role, catalyzes the hydrolysis of the adenine ring of phosphoribosyl-AMP. This Neisseria gonorrhoeae (strain ATCC 700825 / FA 1090) protein is Phosphoribosyl-AMP cyclohydrolase.